Here is a 178-residue protein sequence, read N- to C-terminus: Inorganic pyrophosphatase (178 aa).

Lys31, Arg45, and Tyr57 together coordinate substrate. Mg(2+) contacts are provided by Asp67, Asp72, and Asp104. Tyr141 lines the substrate pocket.

The protein belongs to the PPase family. Homohexamer. Mg(2+) is required as a cofactor.

It is found in the cytoplasm. It carries out the reaction diphosphate + H2O = 2 phosphate + H(+). Its function is as follows. Catalyzes the hydrolysis of inorganic pyrophosphate (PPi) forming two phosphate ions. This is Inorganic pyrophosphatase from Leptospira interrogans serogroup Icterohaemorrhagiae serovar copenhageni (strain Fiocruz L1-130).